The sequence spans 816 residues: Protein kinase C-binding protein NELL2 (816 aa).

An N-terminal signal peptide occupies residues 1-21 (MESRVLLRTFCLIFGLGAVWG). Asn-53, Asn-225, Asn-293, and Asn-298 each carry an N-linked (GlcNAc...) asparagine glycan. The region spanning 64 to 228 (PRSIKASTAT…AQCPDLNRTC (165 aa)) is the Laminin G-like domain. Positions 272–331 (RTCTMKGTTYREFESWIDGCKNCTCLNGTIQCETLICPNPDCPLKSALAYVDGKCCKECK) constitute a VWFC 1 domain. The EGF-like 1 domain maps to 397–439 (GYDFCSERHNCMENSICRNLNDRAVCSCRDGFRALREDNAYCE). 3 disulfide bridges follow: Cys-401-Cys-413, Cys-407-Cys-422, and Cys-424-Cys-438. Positions 440, 441, and 443 each coordinate Ca(2+). The region spanning 440–481 (DIDECAEGRHYCRENTMCVNTPGSFMCICKTGYIRIDDYSCT) is the EGF-like 2; calcium-binding domain. Intrachain disulfides connect Cys-444–Cys-457, Cys-451–Cys-466, Cys-468–Cys-480, Cys-486–Cys-499, Cys-493–Cys-508, Cys-510–Cys-521, Cys-525–Cys-535, Cys-529–Cys-541, and Cys-543–Cys-552. Residues Asn-459, Thr-460, and Ser-463 each coordinate Ca(2+). One can recognise an EGF-like 3; calcium-binding domain in the interval 482-522 (EHDECITNQHNCDENALCFNTVGGHNCVCKPGYTGNGTTCK). The N-linked (GlcNAc...) asparagine glycan is linked to Asn-517. The region spanning 523–553 (AFCKDGCRNGGACIAANVCACPQGFTGPSCE) is the EGF-like 4 domain. O-linked (GlcNAc...) threonine glycosylation occurs at Thr-548. Asp-555, Ile-556, and Glu-558 together coordinate Ca(2+). The 47-residue stretch at 555–601 (DIDECSDGFVQCDSRANCINLPGWYHCECRDGYHDNGMFSPSGESCE) folds into the EGF-like 5; calcium-binding domain. Intrachain disulfides connect Cys-559-Cys-572, Cys-566-Cys-581, and Cys-583-Cys-600. Residues Asn-574, Leu-575, and Trp-578 each coordinate Ca(2+). Residues Asp-602, Ile-603, and Glu-605 each contribute to the Ca(2+) site. One can recognise an EGF-like 6; calcium-binding domain in the interval 602–637 (DIDECGTGRHSCANDTICFNLDGGYDCRCPHGKNCT). 3 cysteine pairs are disulfide-bonded: Cys-606/Cys-619, Cys-613/Cys-628, and Cys-630/Cys-636. A glycan (N-linked (GlcNAc...) asparagine) is linked at Asn-615. Positions 621, 622, and 625 each coordinate Ca(2+). An N-linked (GlcNAc...) asparagine glycan is attached at Asn-635. 2 consecutive VWFC domains span residues 638–693 (GDCI…PECD) and 698–756 (SQCL…PRCV).

As to quaternary structure, homotrimer. Binds to PRKCB. Interacts with NICOL1; this interaction triggers epididymal differentiation. Interacts (via the EGF domains) with ROBO3 (via Fibronectin type-III 1 domain) with a 3:3 stoichiometry; this interaction promotes oligomerization of ROBO3 resulting in the repulsion of commissural axons in the midline.

The protein localises to the secreted. Plays multiple roles in neural tissues, regulates neuronal proliferation, survival, differentiation, polarization, as well as axon guidance and synaptic functions. Plays an important role in axon development during neuronal differentiation through the MAPK intracellular signaling pathway. Via binding to its receptor ROBO3, plays a role in axon guidance, functioning as a repulsive axon guidance cue that contributes to commissural axon guidance to the midline. Required for neuron survival through the modulation of MAPK signaling pathways too. Involved in the regulation of hypothalamic GNRH secretion and the control of puberty. Its function is as follows. Epididymal-secreted protein that signals through a ROS1-pathway to regulate the epididymal initial segment (IS) maturation, sperm maturation and male fertility. The sequence is that of Protein kinase C-binding protein NELL2 from Homo sapiens (Human).